The primary structure comprises 207 residues: dTTP/UTP pyrophosphatase (207 aa).

The active-site Proton acceptor is the D79.

Belongs to the Maf family. YhdE subfamily. The cofactor is a divalent metal cation.

It localises to the cytoplasm. The catalysed reaction is dTTP + H2O = dTMP + diphosphate + H(+). It carries out the reaction UTP + H2O = UMP + diphosphate + H(+). Its function is as follows. Nucleoside triphosphate pyrophosphatase that hydrolyzes dTTP and UTP. May have a dual role in cell division arrest and in preventing the incorporation of modified nucleotides into cellular nucleic acids. The chain is dTTP/UTP pyrophosphatase from Rhodopseudomonas palustris (strain BisB5).